The following is a 298-amino-acid chain: Apolipoprotein E (298 aa).

The N-terminal stretch at 1–18 (MKILWAALVLTLLAGCRA) is a signal peptide. 6 consecutive repeat copies span residues 74–95 (LLMEDTMKELKAYKSELEKEVG), 96–117 (PMAEDTKARLSKELQGAQARLA), 118–139 (GDMEEVRNRLSQYRSEVQAMLG), 140–161 (QSSEELRARLASHLRKLRKRLQ), 162–183 (RDAEELQKRLAVYKAGAQEGAE), and 223–244 (GRLEKVGSQARDRLEEVREQME). The tract at residues 74–244 (LLMEDTMKEL…RLEEVREQME (171 aa)) is 8 X 22 AA approximate tandem repeats. Methionine 137 carries the methionine sulfoxide modification. Serine 141 bears the Phosphoserine mark. The tract at residues 152–162 (HLRKLRKRLQR) is LDL and other lipoprotein receptors binding. 156–159 (LRKR) provides a ligand contact to heparin. Positions 204–272 (ALTSHPLRER…SWFEPMVEDL (69 aa)) are lipid-binding and lipoprotein association. Position 218–225 (218–225 (GEQVRGRL)) interacts with heparin. The tract at residues 260-272 (RLKSWFEPMVEDL) is specificity for association with VLDL.

It belongs to the apolipoprotein A1/A4/E family. As to quaternary structure, homotetramer. May interact with ABCA1; functionally associated with ABCA1 in the biogenesis of HDLs. May interact with APP/A4 amyloid-beta peptide; the interaction is extremely stable in vitro but its physiological significance is unclear. May interact with MAPT. May interact with MAP2. In the cerebrospinal fluid, interacts with secreted SORL1. Interacts with PMEL; this allows the loading of PMEL luminal fragment on ILVs to induce fibril nucleation. In terms of processing, APOE exists as multiple glycosylated and sialylated glycoforms within cells and in plasma. The extent of glycosylation and sialylation are tissue and context specific. Post-translationally, glycated in plasma VLDL. Phosphorylated by FAM20C in the extracellular medium.

The protein resides in the secreted. The protein localises to the extracellular space. It localises to the extracellular matrix. Its subcellular location is the extracellular vesicle. It is found in the endosome. The protein resides in the multivesicular body. APOE is an apolipoprotein, a protein associating with lipid particles, that mainly functions in lipoprotein-mediated lipid transport between organs via the plasma and interstitial fluids. APOE is a core component of plasma lipoproteins and is involved in their production, conversion and clearance. Apolipoproteins are amphipathic molecules that interact both with lipids of the lipoprotein particle core and the aqueous environment of the plasma. As such, APOE associates with chylomicrons, chylomicron remnants, very low density lipoproteins (VLDL) and intermediate density lipoproteins (IDL) but shows a preferential binding to high-density lipoproteins (HDL). It also binds a wide range of cellular receptors including the LDL receptor/LDLR, the LDL receptor-related proteins LRP1, LRP2 and LRP8 and the very low-density lipoprotein receptor/VLDLR that mediate the cellular uptake of the APOE-containing lipoprotein particles. Finally, APOE also has a heparin-binding activity and binds heparan-sulfate proteoglycans on the surface of cells, a property that supports the capture and the receptor-mediated uptake of APOE-containing lipoproteins by cells. A main function of APOE is to mediate lipoprotein clearance through the uptake of chylomicrons, VLDLs, and HDLs by hepatocytes. APOE is also involved in the biosynthesis by the liver of VLDLs as well as their uptake by peripheral tissues ensuring the delivery of triglycerides and energy storage in muscle, heart and adipose tissues. By participating in the lipoprotein-mediated distribution of lipids among tissues, APOE plays a critical role in plasma and tissues lipid homeostasis. APOE is also involved in two steps of reverse cholesterol transport, the HDLs-mediated transport of cholesterol from peripheral tissues to the liver, and thereby plays an important role in cholesterol homeostasis. First, it is functionally associated with ABCA1 in the biogenesis of HDLs in tissues. Second, it is enriched in circulating HDLs and mediates their uptake by hepatocytes. APOE also plays an important role in lipid transport in the central nervous system, regulating neuron survival and sprouting. This Hydrochoerus hydrochaeris (Capybara) protein is Apolipoprotein E (APOE).